The primary structure comprises 209 residues: Orotate phosphoribosyltransferase (209 aa).

Residues arginine 96, lysine 100, histidine 102, and 122–130 contribute to the 5-phospho-alpha-D-ribose 1-diphosphate site; that span reads EDLISTGGS. Residue serine 126 participates in orotate binding.

It belongs to the purine/pyrimidine phosphoribosyltransferase family. PyrE subfamily. As to quaternary structure, homodimer. Mg(2+) serves as cofactor.

The catalysed reaction is orotidine 5'-phosphate + diphosphate = orotate + 5-phospho-alpha-D-ribose 1-diphosphate. Its pathway is pyrimidine metabolism; UMP biosynthesis via de novo pathway; UMP from orotate: step 1/2. Functionally, catalyzes the transfer of a ribosyl phosphate group from 5-phosphoribose 1-diphosphate to orotate, leading to the formation of orotidine monophosphate (OMP). This Streptococcus pyogenes serotype M3 (strain ATCC BAA-595 / MGAS315) protein is Orotate phosphoribosyltransferase.